The sequence spans 256 residues: Lysine-rich coiled-coil protein 1 (256 aa).

2 disordered regions span residues 62–84 and 144–256; these read RLPS…EDRV and TIDP…ILGF. Polar residues predominate over residues 64 to 79; sequence PSGTNHSYPRSCSSSQ. 2 stretches are compositionally biased toward basic and acidic residues: residues 161 to 188 and 218 to 227; these read HVEE…DLNK and KTRDVSSKKE. Positions 209-247 form a coiled coil; sequence EKLKNRKEKKTRDVSSKKEDRKRRKEKKEQGEERTEEEM.

This is Lysine-rich coiled-coil protein 1 (Krcc1) from Mus musculus (Mouse).